A 71-amino-acid chain; its full sequence is DNA gyrase inhibitor YacG (71 aa).

The Zn(2+) site is built by Cys-9, Cys-12, Cys-28, and Cys-32. Positions 43-71 (EEKRIPSQSESNDSDEWSEMPEQDPKPFN) are disordered. Over residues 54–64 (NDSDEWSEMPE) the composition is skewed to acidic residues.

This sequence belongs to the DNA gyrase inhibitor YacG family. As to quaternary structure, interacts with GyrB. Zn(2+) serves as cofactor.

In terms of biological role, inhibits all the catalytic activities of DNA gyrase by preventing its interaction with DNA. Acts by binding directly to the C-terminal domain of GyrB, which probably disrupts DNA binding by the gyrase. This is DNA gyrase inhibitor YacG from Proteus mirabilis (strain HI4320).